The sequence spans 481 residues: Xylulose kinase (481 aa).

81-82 contributes to the substrate binding site; it reads QH. D239 (proton acceptor) is an active-site residue.

This sequence belongs to the FGGY kinase family.

The catalysed reaction is D-xylulose + ATP = D-xylulose 5-phosphate + ADP + H(+). In terms of biological role, catalyzes the phosphorylation of D-xylulose to D-xylulose 5-phosphate. The sequence is that of Xylulose kinase from Streptomyces rubiginosus.